Consider the following 226-residue polypeptide: Pre-mRNA-splicing factor SPF27 (226 aa).

A2 carries the N-acetylalanine modification. At S94 the chain carries Phosphoserine. A coiled-coil region spans residues Y139–R223.

Belongs to the SPF27 family. In terms of assembly, component of the pre-catalytic and catalytic spliceosome complexes. Component of the postcatalytic spliceosome P complex. Component of the PRP19-CDC5L splicing complex composed of a core complex comprising a homotetramer of PRPF19, CDC5L, PLRG1 and BCAS2, and at least three less stably associated proteins CTNNBL1, CWC15 and HSPA8. Interacts directly in the complex with PRPF19, CDC5L and PLRG1.

Its subcellular location is the nucleus. The protein resides in the nucleolus. In terms of biological role, required for pre-mRNA splicing as component of the activated spliceosome. Component of the PRP19-CDC5L complex that forms an integral part of the spliceosome and is required for activating pre-mRNA splicing. May have a scaffolding role in the spliceosome assembly as it contacts all other components of the core complex. The PRP19-CDC5L complex may also play a role in the response to DNA damage (DDR). The polypeptide is Pre-mRNA-splicing factor SPF27 (BCAS2) (Pongo abelii (Sumatran orangutan)).